The following is a 281-amino-acid chain: 2,3,4,5-tetrahydropyridine-2,6-dicarboxylate N-succinyltransferase (281 aa).

2 residues coordinate substrate: R108 and D145.

The protein belongs to the transferase hexapeptide repeat family. In terms of assembly, homotrimer.

It is found in the cytoplasm. The catalysed reaction is (S)-2,3,4,5-tetrahydrodipicolinate + succinyl-CoA + H2O = (S)-2-succinylamino-6-oxoheptanedioate + CoA. The protein operates within amino-acid biosynthesis; L-lysine biosynthesis via DAP pathway; LL-2,6-diaminopimelate from (S)-tetrahydrodipicolinate (succinylase route): step 1/3. The sequence is that of 2,3,4,5-tetrahydropyridine-2,6-dicarboxylate N-succinyltransferase from Parvibaculum lavamentivorans (strain DS-1 / DSM 13023 / NCIMB 13966).